The primary structure comprises 160 residues: Major strawberry allergen Fra a 1-E (160 aa).

This sequence belongs to the BetVI family. As to quaternary structure, monomer. Interacts with AP. As to expression, highly expressed in roots. Expressed in open flowers. Expressed at low levels in leaves, flower buds and fruits.

Its function is as follows. Involved in the control of flavonoid biosynthesis in fruits, probably by binding directly to natural flavonoids. Binds the natural flavonoid quercetin-3-O-glucuronide with affinities in the low micromolar range. The sequence is that of Major strawberry allergen Fra a 1-E from Fragaria ananassa (Strawberry).